The following is a 635-amino-acid chain: Multiple inositol polyphosphate phosphatase 1 (635 aa).

A signal peptide spans 1-23; it reads MMVKIKNIIILFCIFGLLSNVSS. The Extracellular portion of the chain corresponds to 24 to 565; the sequence is LSSSSSSSQS…GNDSHSKKSS (542 aa). Positions 66 to 102 are disordered; it reads KNGDSNSQGDGSSGNSNSNSNSNSNSNSNSDSSNEPP. Over residues 67–99 the composition is skewed to low complexity; that stretch reads NGDSNSQGDGSSGNSNSNSNSNSNSNSNSDSSN. His116 is an active-site residue. Residues 380-421 are compositionally biased toward low complexity; sequence SSSSSSSSSSNNGDNSGSNGSSGSGSSTSTSSNDNGSTNNND. The segment at 380 to 425 is disordered; sequence SSSSSSSSSSNNGDNSGSNGSSGSGSSTSTSSNDNGSTNNNDNKVE. A helical transmembrane segment spans residues 566 to 586; that stretch reads YFLAIFIPITFLVGGTIGGIF. The Cytoplasmic portion of the chain corresponds to 587–635; the sequence is TYFSYEKIMQVKNRKKLTQYGNDEFISSPKSKSFSFKPTKFDSRSPLIQ. Low complexity predominate over residues 614-624; it reads SPKSKSFSFKP. Residues 614 to 635 form a disordered region; it reads SPKSKSFSFKPTKFDSRSPLIQ.

It belongs to the histidine acid phosphatase family. MINPP1 subfamily.

It localises to the membrane. The enzyme catalyses 1D-myo-inositol hexakisphosphate + H2O = 1D-myo-inositol 1,2,4,5,6-pentakisphosphate + phosphate. It carries out the reaction 1D-myo-inositol 1,2,4,5,6-pentakisphosphate + H2O = 1D-myo-inositol 1,2,5,6-tetrakisphosphate + phosphate. The catalysed reaction is 1D-myo-inositol 1,2,5,6-tetrakisphosphate + H2O = 1D-myo-inositol 1,2,6-trisphosphate + phosphate. It catalyses the reaction 1D-myo-inositol 1,2,6-trisphosphate + H2O = 1D-myo-inositol 1,2-bisphosphate + phosphate. The enzyme catalyses 1D-myo-inositol 1,2-bisphosphate + H2O = 1D-myo-inositol 2-phosphate + phosphate. It carries out the reaction (2R)-2,3-bisphosphoglycerate + H2O = (2R)-2-phosphoglycerate + phosphate. Its function is as follows. Probable multiple inositol polyphosphate phosphatase that hydrolyzes 1D-myo-inositol 1,3,4,5,6-pentakisphosphate (InsP5[2OH]) and 1D-myo-inositol hexakisphosphate (InsP6) to a range of less phosphorylated inositol phosphates. This regulates the availability of these various small molecule second messengers and metal chelators which control many aspects of cell physiology. May have a dual substrate specificity, and function as a 2,3-bisphosphoglycerate 3-phosphatase hydrolyzing 2,3-bisphosphoglycerate to 2-phosphoglycerate. 2,3-bisphosphoglycerate (BPG) is formed as part of the Rapoport-Luebering glycolytic bypass. The polypeptide is Multiple inositol polyphosphate phosphatase 1 (mipp1) (Dictyostelium discoideum (Social amoeba)).